Consider the following 1228-residue polypeptide: Apical endosomal glycoprotein (1228 aa).

The N-terminal stretch at Met1–Gly21 is a signal peptide. At Thr23–Pro1159 the chain is on the extracellular side. Positions His28 to Glu49 constitute an LDL-receptor class A 1; truncated domain. Residues Phe65–Leu223 enclose the MAM 1 domain. Asn204 carries an N-linked (GlcNAc...) asparagine glycan. The 39-residue stretch at Arg229–Ser267 folds into the LDL-receptor class A 2 domain. Intrachain disulfides connect Cys230–Cys242, Cys237–Cys255, and Cys249–Cys266. In terms of domain architecture, MAM 2 spans Met270 to Leu426. Asn290 and Asn340 each carry an N-linked (GlcNAc...) asparagine glycan. The LDL-receptor class A 3 domain occupies Thr457–Gly492. Disulfide bonds link Cys458/Cys469, Cys465/Cys482, and Cys476/Cys491. 4 consecutive MAM domains span residues Gly492–Pro649, Leu659–Ala815, Lys817–Gln975, and Gly977–Gln1144. Asn641 carries N-linked (GlcNAc...) asparagine glycosylation. Residue Asn841 is glycosylated (N-linked (GlcNAc...) asparagine). Residues Val1160–Trp1180 form a helical membrane-spanning segment. The Cytoplasmic segment spans residues His1181 to Ala1228.

It localises to the membrane. Functionally, probably involved in the sorting and selective transport of receptors and ligands across polarized epithelia. This Mus musculus (Mouse) protein is Apical endosomal glycoprotein.